We begin with the raw amino-acid sequence, 69 residues long: Magnetosome protein MamI (69 aa).

Topologically, residues 1–2 (MP) are cytoplasmic. Residues 3-23 (SVIFGLLALAIGLLGLTAWWW) traverse the membrane as a helical segment. At 24 to 31 (SVTEFLRG) the chain is on the lumenal side. A helical membrane pass occupies residues 32–52 (AVPVALIIFGLVALAAGVQSV). Over 53 to 69 (RVPPAGKRANSDPNIDG) the chain is Cytoplasmic.

This sequence belongs to the magnetosome MamI protein family.

The protein localises to the magnetosome membrane. May be involved in an early stage of magnetosome nucleation. Not essential for formation of magnetosome membrane vesicles, it is probably functionally redundant with other proteins. May bind magnetite. One of 7 genes (mamLQBIEMO) able to induce magnetosome membrane biogenesis; coexpression of mamLQRBIEMO in a deletion of the 17 gene mamAB operon restores magnetosome vesicle formation but not magnetite biosynthesis. This is Magnetosome protein MamI from Magnetospirillum gryphiswaldense (strain DSM 6361 / JCM 21280 / NBRC 15271 / MSR-1).